A 265-amino-acid chain; its full sequence is Glutamate racemase (265 aa).

Residues 12–13 (DS) and 44–45 (YG) contribute to the substrate site. Cys75 acts as the Proton donor/acceptor in catalysis. Substrate is bound at residue 76–77 (NT). Cys186 acts as the Proton donor/acceptor in catalysis. 187–188 (TH) serves as a coordination point for substrate.

This sequence belongs to the aspartate/glutamate racemases family.

It catalyses the reaction L-glutamate = D-glutamate. The protein operates within cell wall biogenesis; peptidoglycan biosynthesis. Provides the (R)-glutamate required for cell wall biosynthesis. This Pseudomonas aeruginosa (strain UCBPP-PA14) protein is Glutamate racemase.